We begin with the raw amino-acid sequence, 558 residues long: Kelch-like protein 23 (558 aa).

A BTB domain is found at 36–104 (TDITLQCPSG…AYTSQIEITE (69 aa)). Residues 139-240 (CIGMHSFAEF…DPVYLKTALG (102 aa)) form the BACK domain. Kelch repeat units lie at residues 274–320 (TMYI…CLGP), 321–369 (NIYV…TLGG), 370–416 (CVYA…VLHD), 418–466 (IYVI…PLEN), 467–508 (KLYL…IMNG), and 510–557 (IYVT…CVYN).

This Pongo abelii (Sumatran orangutan) protein is Kelch-like protein 23 (KLHL23).